A 339-amino-acid polypeptide reads, in one-letter code: Heat-inducible transcription repressor HrcA (339 aa).

Belongs to the HrcA family.

Its function is as follows. Negative regulator of class I heat shock genes (grpE-dnaK-dnaJ and groELS operons). Prevents heat-shock induction of these operons. This chain is Heat-inducible transcription repressor HrcA, found in Clostridioides difficile (strain 630) (Peptoclostridium difficile).